The sequence spans 111 residues: uncharacterized protein (111 aa).

In terms of assembly, homodimer, or homotetramer.

This is an uncharacterized protein from Bacillus subtilis (strain 168).